A 2167-amino-acid chain; its full sequence is SH3 and multiple ankyrin repeat domains protein 1 (2167 aa).

Positions 1–63 (MTHSPATSED…TRGLQGRSMS (63 aa)) are disordered. A compositionally biased stretch (low complexity) spans 17–32 (SECPEGGSESDSSPDG). The segment covering 33–47 (PGRGPQGTRGRGSGA) has biased composition (gly residues). The residue at position 43 (R43) is an Omega-N-methylarginine. Phosphotyrosine is present on Y186. ANK repeat units follow at residues 212 to 242 (SGETPLTLAAQTEGSVEVIRTLCLGGAHIDF), 246 to 275 (DGMTALHKAACARHCLALTALLDLGGSPNY), 279 to 309 (RGLTPLFHTAMVGGDPRCCELLLYNRAQLGI), 313 to 342 (NGWQEIHQACQRGHSQHLEHLLFYGAEPGA), 346 to 375 (SGNTALHICALYNKETCARILLYRGANKDV), and 379 to 407 (NGQTPFQVAVIAGNFELGELIRNHREQDV). Disordered stretches follow at residues 413-432 (SPKYAARRRGPPGAGLTVPP) and 454-546 (PGAS…SRGR). The span at 454–479 (PGASSSGTPGPTSGSQGQSQPSAPST) shows a compositional bias: low complexity. The span at 527–542 (PAGGTGGSGGPGGSLG) shows a compositional bias: gly residues. A Phosphoserine modification is found at S540. Omega-N-methylarginine is present on R544. Residues 554–613 (VPGRSFMAVKSYQAQGEGEISLSKGEKIKVLSIGEGGFWEGQVKGRVGWFPSDCLEEVAN) enclose the SH3 domain. The 95-residue stretch at 663–757 (TVLLQKKDSE…TLMVKVVMVT (95 aa)) folds into the PDZ domain. 2 positions are modified to phosphoserine: S671 and S791. Residues 841 to 894 (ISASESPGPGGLASLGKHRPKGFFATESSFDPHHRSQPSYDRPSFLPPGPGLML) form a disordered region. Position 898 is a phosphoserine (S898). Disordered regions lie at residues 917–1233 (SRSL…LDFT) and 1245–1290 (RREG…RHSK). The segment covering 928 to 947 (IPPPPTTSPPEPPYSTPPAP) has biased composition (pro residues). R958 is subject to Omega-N-methylarginine. Over residues 969 to 980 (PLPASSPSSFDG) the composition is skewed to low complexity. The segment covering 1004-1028 (AHHHPPHHHHHHAPPPQPHHHHAHP) has biased composition (basic residues). R1059 is subject to Omega-N-methylarginine. Over residues 1064 to 1089 (SPTSGAPSPSHHSSSGGSSGPAQAPA) the composition is skewed to low complexity. Residues R1098 and R1109 each carry the omega-N-methylarginine modification. Low complexity-rich tracts occupy residues 1132 to 1146 (SLPPASSPTSPALPR) and 1171 to 1184 (STSSSGRSSQGSST). The segment covering 1203–1224 (SPAPATSPVPPSPSPVPTPASP) has biased composition (pro residues). Basic and acidic residues predominate over residues 1245-1256 (RREGGWQNEARR). Asymmetric dimethylarginine is present on R1257. At S1291 the chain carries Phosphoserine. Disordered regions lie at residues 1308–1331 (GGSSGGYGAYAAGSRAYGGSGSSS), 1361–1417 (LAAR…VLRL), 1429–1458 (RAGLGSQEKALTASPPAARRSLLHRLPPTA), 1500–1725 (FLEN…AGVA), 1740–1790 (GQAF…TPTS), 1828–1866 (VPPVPLPTASSLPRKLLPWEEGPGPPPPPLPGPLSQPQA), 1898–1988 (PWAR…STRH), and 2002–2029 (RRAPSPSLLPASDHKVSPAPRPSSLPIL). Residues 1363-1372 (ARERALKESS) are compositionally biased toward basic and acidic residues. Residues 1378–1395 (PQPPPRPPSPRYDAPPPT) show a composition bias toward pro residues. The span at 1396–1408 (LHHHSPHSPHSPH) shows a compositional bias: basic residues. Residue R1429 is modified to Omega-N-methylarginine. S1442 carries the post-translational modification Phosphoserine. Over residues 1530–1541 (RRVLPTSPTSPR) the composition is skewed to low complexity. The segment covering 1589–1615 (PLTPGPPHPLPDPPSPATPLPAAPPPA) has biased composition (pro residues). Residues 1624–1641 (DSTASSLTSYDSEVATLT) show a composition bias toward polar residues. Over residues 1648 to 1676 (PGDPPAPGPPAPAAPAPPAPQPGPDPPPG) the composition is skewed to pro residues. Positions 1684-1694 (VDSRSSSDHPL) are enriched in basic and acidic residues. Residues 1695 to 1708 (ETISSASTLSSLSA) show a composition bias toward low complexity. The span at 1709-1724 (EGGGNTGGVAGGGAGV) shows a compositional bias: gly residues. Residues 1850-1861 (PGPPPPPLPGPL) show a composition bias toward pro residues. Residue R1901 is modified to Omega-N-methylarginine. Low complexity-rich tracts occupy residues 1934-1945 (SQTSLLSKPSSS), 1960-1985 (TGSGVSSSTAAAPGATSPSASSASAS), and 2002-2012 (RRAPSPSLLPA). Residues R2022, R2042, and R2080 each carry the omega-N-methylarginine modification. One can recognise an SAM domain in the interval 2104–2167 (WTKFDVADWL…DRALKFFLER (64 aa)).

It belongs to the SHANK family. May homomultimerize via its SAM domain. Interacts with the C-terminus of SSTR2 via the PDZ domain. Interacts with SHARPIN, SPTAN1, HOMER1 and DLGAP1/GKAP. Part of a complex with DLG4/PSD-95 and DLGAP1/GKAP. Interacts with BAIAP2. Interacts with IGSF9. Interacts with HOMER1 and HOMER3. In brain, highly expressed in cortex, hippocampus and cerebellum.

Its subcellular location is the cytoplasm. The protein resides in the synapse. It localises to the postsynaptic density. Seems to be an adapter protein in the postsynaptic density (PSD) of excitatory synapses that interconnects receptors of the postsynaptic membrane including NMDA-type and metabotropic glutamate receptors, and the actin-based cytoskeleton. Plays a role in the structural and functional organization of the dendritic spine and synaptic junction. Overexpression promotes maturation of dendritic spines and the enlargement of spine heads via its ability to recruit Homer to postsynaptic sites, and enhances presynaptic function. In Mus musculus (Mouse), this protein is SH3 and multiple ankyrin repeat domains protein 1 (Shank1).